Here is a 299-residue protein sequence, read N- to C-terminus: MSINPIVLLFALLCTLLSPFSIGQSTIIHEQKSLYQDIVVFEHQDFRCLSFTAKKGERVQTCEYQDPQDKRIYFPYVRMTLAGLLFNPKPERILIIGLGGGSVPSALAELYPESHMDIVEIDPVVSQIAERYFYFQPSHNTRVHTGDARVYIKRAGLKGQKYDFILLDAFNGEYIPEHLMTREFLMETKQLLSSSGVLVANTFSTSKLYDHESATYRSVFGEFYNFKIPQESGNRVILSMLTSLPNQQALQQQAEALASALQPFAIEIENYPSLMTLEADWDEQARLLTDQFSPANLLK.

Residues 6 to 252 (IVLLFALLCT…SLPNQQALQQ (247 aa)) form the PABS domain. S-methyl-5'-thioadenosine is bound by residues Gln36, Glu120, and 147–148 (DA). Asp168 acts as the Proton acceptor in catalysis.

The protein belongs to the spermidine/spermine synthase family. As to quaternary structure, homodimer or homotetramer.

It localises to the cytoplasm. It carries out the reaction S-adenosyl 3-(methylsulfanyl)propylamine + putrescine = S-methyl-5'-thioadenosine + spermidine + H(+). It functions in the pathway amine and polyamine biosynthesis; spermidine biosynthesis; spermidine from putrescine: step 1/1. Its function is as follows. Catalyzes the irreversible transfer of a propylamine group from the amino donor S-adenosylmethioninamine (decarboxy-AdoMet) to putrescine (1,4-diaminobutane) to yield spermidine. This Vibrio vulnificus (strain CMCP6) protein is Polyamine aminopropyltransferase.